Here is a 161-residue protein sequence, read N- to C-terminus: Allophycocyanin subunit alpha-B (161 aa).

The residue at position 71 (N71) is an N4-methylasparagine. C81 lines the (2R,3E)-phycocyanobilin pocket.

The protein belongs to the phycobiliprotein family. Heterohexamer of two alpha chains, one alpha-B chain and three beta chains. Contains one covalently linked bilin chromophore.

It is found in the cellular thylakoid membrane. Functionally, light-harvesting photosynthetic bile pigment-protein from the phycobiliprotein complex. Allophycocyanin has a maximum absorption at approximately 654 nanometers. In Synechocystis sp. (strain ATCC 27184 / PCC 6803 / Kazusa), this protein is Allophycocyanin subunit alpha-B (apcD).